Consider the following 298-residue polypeptide: FH protein interacting protein FIP2 (298 aa).

The 72-residue stretch at 9 to 80 (SMVRLNIGGK…LRDGVIPSLS (72 aa)) folds into the BTB domain. Pentapeptide repeat domains follow at residues 129-165 (ERVR…FFSR), 166-203 (TNLQ…GALL), 216-255 (ACLV…NLKG), and 256-295 (AKLS…NMTG).

In terms of assembly, interacts with FH1. In terms of tissue distribution, expressed in all tissues but preferentially in roots and flowers.

It functions in the pathway protein modification; protein ubiquitination. Its function is as follows. May act as a substrate-specific adapter of an E3 ubiquitin-protein ligase complex (CUL3-RBX1-BTB) which mediates the ubiquitination and subsequent proteasomal degradation of target proteins. The chain is FH protein interacting protein FIP2 (FIP2) from Arabidopsis thaliana (Mouse-ear cress).